The sequence spans 170 residues: Dual-action ribosomal maturation protein DarP (170 aa).

The protein belongs to the DarP family.

It localises to the cytoplasm. Member of a network of 50S ribosomal subunit biogenesis factors which assembles along the 30S-50S interface, preventing incorrect 23S rRNA structures from forming. Promotes peptidyl transferase center (PTC) maturation. This chain is Dual-action ribosomal maturation protein DarP, found in Neisseria meningitidis serogroup A / serotype 4A (strain DSM 15465 / Z2491).